A 299-amino-acid polypeptide reads, in one-letter code: Bifunctional protein FolD (299 aa).

NADP(+) contacts are provided by residues 166 to 168 (GRS), Ser191, and Ile232.

The protein belongs to the tetrahydrofolate dehydrogenase/cyclohydrolase family. In terms of assembly, homodimer.

The catalysed reaction is (6R)-5,10-methylene-5,6,7,8-tetrahydrofolate + NADP(+) = (6R)-5,10-methenyltetrahydrofolate + NADPH. The enzyme catalyses (6R)-5,10-methenyltetrahydrofolate + H2O = (6R)-10-formyltetrahydrofolate + H(+). The protein operates within one-carbon metabolism; tetrahydrofolate interconversion. Its function is as follows. Catalyzes the oxidation of 5,10-methylenetetrahydrofolate to 5,10-methenyltetrahydrofolate and then the hydrolysis of 5,10-methenyltetrahydrofolate to 10-formyltetrahydrofolate. The polypeptide is Bifunctional protein FolD (Dinoroseobacter shibae (strain DSM 16493 / NCIMB 14021 / DFL 12)).